The primary structure comprises 358 residues: Dual-specificity RNA methyltransferase RlmN (358 aa).

Glu91 acts as the Proton acceptor in catalysis. The region spanning 102 to 337 (GNIRITQCLS…TILRKSKGQD (236 aa)) is the Radical SAM core domain. Cys109 and Cys342 are oxidised to a cystine. [4Fe-4S] cluster is bound by residues Cys116, Cys120, and Cys123. S-adenosyl-L-methionine is bound by residues 169 to 170 (GE), Ser201, 223 to 225 (SLH), and Asn299. The active-site S-methylcysteine intermediate is Cys342.

It belongs to the radical SAM superfamily. RlmN family. It depends on [4Fe-4S] cluster as a cofactor.

It is found in the cytoplasm. It carries out the reaction adenosine(2503) in 23S rRNA + 2 reduced [2Fe-2S]-[ferredoxin] + 2 S-adenosyl-L-methionine = 2-methyladenosine(2503) in 23S rRNA + 5'-deoxyadenosine + L-methionine + 2 oxidized [2Fe-2S]-[ferredoxin] + S-adenosyl-L-homocysteine. It catalyses the reaction adenosine(37) in tRNA + 2 reduced [2Fe-2S]-[ferredoxin] + 2 S-adenosyl-L-methionine = 2-methyladenosine(37) in tRNA + 5'-deoxyadenosine + L-methionine + 2 oxidized [2Fe-2S]-[ferredoxin] + S-adenosyl-L-homocysteine. In terms of biological role, specifically methylates position 2 of adenine 2503 in 23S rRNA and position 2 of adenine 37 in tRNAs. m2A2503 modification seems to play a crucial role in the proofreading step occurring at the peptidyl transferase center and thus would serve to optimize ribosomal fidelity. This is Dual-specificity RNA methyltransferase RlmN from Lawsonia intracellularis (strain PHE/MN1-00).